The sequence spans 60 residues: UPF0337 protein SSP1134 (60 aa).

The disordered stretch occupies residues 1 to 41 (MADENKFEQAKGNVKETVGNVTDNKELENEGKEDKTSGKAK). Basic and acidic residues predominate over residues 23-41 (DNKELENEGKEDKTSGKAK).

This sequence belongs to the UPF0337 (CsbD) family.

In Staphylococcus saprophyticus subsp. saprophyticus (strain ATCC 15305 / DSM 20229 / NCIMB 8711 / NCTC 7292 / S-41), this protein is UPF0337 protein SSP1134.